Consider the following 371-residue polypeptide: Probable endolytic peptidoglycan transglycosylase RlpA (371 aa).

An N-terminal signal peptide occupies residues 1 to 25 (MNQRHLWTIVALSVTVLGTPAVGRT). Positions 177 to 191 (LVASQSQNKSSSSQQ) are enriched in low complexity. The interval 177-196 (LVASQSQNKSSSSQQKSERY) is disordered.

This sequence belongs to the RlpA family.

Lytic transglycosylase with a strong preference for naked glycan strands that lack stem peptides. This chain is Probable endolytic peptidoglycan transglycosylase RlpA, found in Nostoc sp. (strain PCC 7120 / SAG 25.82 / UTEX 2576).